A 988-amino-acid polypeptide reads, in one-letter code: Little elongation complex subunit 2 (988 aa).

Serine 322 bears the Phosphoserine mark. 2 disordered regions span residues phenylalanine 402 to proline 422 and valine 500 to serine 587. The segment covering proline 413–proline 422 has biased composition (low complexity). Over residues asparagine 534 to aspartate 547 the composition is skewed to basic and acidic residues. Positions asparagine 563–alanine 576 are enriched in low complexity. A Phosphoserine modification is found at serine 587. The residue at position 589 (threonine 589) is a Phosphothreonine. Disordered stretches follow at residues aspartate 604–glutamate 633, proline 673–alanine 706, and alanine 942–serine 968. Residues asparagine 615–threonine 629 show a composition bias toward low complexity.

It belongs to the ICE2 family. In terms of assembly, component of the little elongation complex (LEC), at least composed of ELL (ELL, ELL2 or ELL3), ZC3H8, ICE1 and ICE2. Interacts with ICE1 (via C-terminus domain). Interacts with ELL. Expressed in brain, kidney, liver and testis.

The protein resides in the nucleus. Its function is as follows. Component of the little elongation complex (LEC), a complex required to regulate small nuclear RNA (snRNA) gene transcription by RNA polymerase II and III. This Mus musculus (Mouse) protein is Little elongation complex subunit 2 (Ice2).